Here is a 166-residue protein sequence, read N- to C-terminus: NAD(P)H-quinone oxidoreductase subunit I, chloroplastic (166 aa).

2 consecutive 4Fe-4S ferredoxin-type domains span residues 55-84 (GRIH…VDWK) and 95-124 (LNYS…MTEE). The [4Fe-4S] cluster site is built by cysteine 64, cysteine 67, cysteine 70, cysteine 74, cysteine 104, cysteine 107, cysteine 110, and cysteine 114.

Belongs to the complex I 23 kDa subunit family. In terms of assembly, NDH is composed of at least 16 different subunits, 5 of which are encoded in the nucleus. [4Fe-4S] cluster is required as a cofactor.

It is found in the plastid. The protein resides in the chloroplast thylakoid membrane. It catalyses the reaction a plastoquinone + NADH + (n+1) H(+)(in) = a plastoquinol + NAD(+) + n H(+)(out). It carries out the reaction a plastoquinone + NADPH + (n+1) H(+)(in) = a plastoquinol + NADP(+) + n H(+)(out). Its function is as follows. NDH shuttles electrons from NAD(P)H:plastoquinone, via FMN and iron-sulfur (Fe-S) centers, to quinones in the photosynthetic chain and possibly in a chloroplast respiratory chain. The immediate electron acceptor for the enzyme in this species is believed to be plastoquinone. Couples the redox reaction to proton translocation, and thus conserves the redox energy in a proton gradient. This chain is NAD(P)H-quinone oxidoreductase subunit I, chloroplastic, found in Melampodium leucanthum (Black foot daisy).